The following is a 419-amino-acid chain: Dynein regulatory complex protein 9 (419 aa).

2 disordered regions span residues 25–45 (TGEP…EETS) and 394–419 (NFKM…RRKK). A compositionally biased stretch (acidic residues) spans 30–45 (EAAEEDLDYEEEEETS). Residues 372-401 (ELRSIVKLQAWWRGSVVRKEIGNFKMPKKD) enclose the IQ domain. Residues 394 to 413 (NFKMPKKDKDDSKDSKGKEK) show a composition bias toward basic and acidic residues.

It belongs to the DRC9 family. As to quaternary structure, component of the nexin-dynein regulatory complex (N-DRC). Interacts (via IQ domain) with CALM when calcium levels are low. Does not interact with CALM in the presence of Ca(2+). Interacts with the HSP70 proteins HSPA1L and HSPA8. May form a complex with CAMK4 and HSP70. In terms of tissue distribution, expressed in the testes (at protein level). Also detected in oviduct (at protein level). Also detected in the trachea.

Its subcellular location is the cytoplasm. The protein localises to the cell projection. It localises to the cilium. The protein resides in the flagellum. It is found in the cytoskeleton. Its subcellular location is the flagellum axoneme. Its function is as follows. Component of the nexin-dynein regulatory complex (N-DRC), a key regulator of ciliary/flagellar motility which maintains the alignment and integrity of the distal axoneme and regulates microtubule sliding in motile axonemes. Binds calmodulin when cellular Ca(2+) levels are low and thereby contributes to the regulation of calcium and calmodulin-dependent protein kinase IV (CAMK4) activity; contributes to the regulation of CAMK4 signaling cascades. Required for normal axoneme assembly in sperm flagella, normal sperm tail formation and for male fertility. The sequence is that of Dynein regulatory complex protein 9 (Iqcg) from Mus musculus (Mouse).